A 423-amino-acid chain; its full sequence is Aspartate--tRNA(Asp) ligase (423 aa).

Glu-163 lines the L-aspartate pocket. The tract at residues 185 to 188 (QLYK) is aspartate. Arg-207 serves as a coordination point for L-aspartate. ATP is bound by residues 207 to 209 (RAE), 215 to 217 (RHL), and Glu-346. Mg(2+)-binding residues include Glu-346 and Ser-349. The L-aspartate site is built by Ser-349 and Arg-353. 394 to 397 (GLER) is a binding site for ATP.

It belongs to the class-II aminoacyl-tRNA synthetase family. Type 2 subfamily. In terms of assembly, homodimer. Mg(2+) serves as cofactor.

Its subcellular location is the cytoplasm. It carries out the reaction tRNA(Asp) + L-aspartate + ATP = L-aspartyl-tRNA(Asp) + AMP + diphosphate. Catalyzes the attachment of L-aspartate to tRNA(Asp) in a two-step reaction: L-aspartate is first activated by ATP to form Asp-AMP and then transferred to the acceptor end of tRNA(Asp). This Picrophilus torridus (strain ATCC 700027 / DSM 9790 / JCM 10055 / NBRC 100828 / KAW 2/3) protein is Aspartate--tRNA(Asp) ligase.